Here is a 425-residue protein sequence, read N- to C-terminus: Phosphoribosylamine--glycine ligase (425 aa).

The region spanning 107–312 is the ATP-grasp domain; sequence KDLCARYNIP…LLVLLNAAVD (206 aa). ATP is bound at residue 133 to 193; it reads VDQTGAPIVI…EEFMTGEEAS (61 aa). Residues 214–233 form a disordered region; that stretch reads RVGDGDVGPNTGGMGAYSPA. Positions 282 and 284 each coordinate Mg(2+).

This sequence belongs to the GARS family. Mg(2+) serves as cofactor. Requires Mn(2+) as cofactor.

The catalysed reaction is 5-phospho-beta-D-ribosylamine + glycine + ATP = N(1)-(5-phospho-beta-D-ribosyl)glycinamide + ADP + phosphate + H(+). It functions in the pathway purine metabolism; IMP biosynthesis via de novo pathway; N(1)-(5-phospho-D-ribosyl)glycinamide from 5-phospho-alpha-D-ribose 1-diphosphate: step 2/2. In Mesorhizobium japonicum (strain LMG 29417 / CECT 9101 / MAFF 303099) (Mesorhizobium loti (strain MAFF 303099)), this protein is Phosphoribosylamine--glycine ligase.